An 833-amino-acid chain; its full sequence is Leucine--tRNA ligase (833 aa).

The short motif at 41–52 (PYPSGAGLHVGH) is the 'HIGH' region element. The 'KMSKS' region signature appears at 610-614 (KMSKS). Residue Lys-613 coordinates ATP.

The protein belongs to the class-I aminoacyl-tRNA synthetase family.

It is found in the cytoplasm. The enzyme catalyses tRNA(Leu) + L-leucine + ATP = L-leucyl-tRNA(Leu) + AMP + diphosphate. The sequence is that of Leucine--tRNA ligase from Streptococcus pyogenes serotype M18 (strain MGAS8232).